The following is a 156-amino-acid chain: Ribosomal RNA large subunit methyltransferase H (156 aa).

S-adenosyl-L-methionine-binding positions include Leu-73, Gly-104, and 123-128 (ISSMTL).

This sequence belongs to the RNA methyltransferase RlmH family. In terms of assembly, homodimer.

It is found in the cytoplasm. The enzyme catalyses pseudouridine(1915) in 23S rRNA + S-adenosyl-L-methionine = N(3)-methylpseudouridine(1915) in 23S rRNA + S-adenosyl-L-homocysteine + H(+). Its function is as follows. Specifically methylates the pseudouridine at position 1915 (m3Psi1915) in 23S rRNA. The protein is Ribosomal RNA large subunit methyltransferase H of Burkholderia cenocepacia (strain HI2424).